The sequence spans 212 residues: U8 snoRNA-decapping enzyme (212 aa).

Residues 1–23 (MAESRSPDRGAKEDKPRPRNISR) form a disordered region. Substrate-binding residues include His-37, Arg-63, and Phe-70. The 149-residue stretch at 39–187 (LLHAPSQAKL…IGNSKSQLLY (149 aa)) folds into the Nudix hydrolase domain. Mn(2+) is bound by residues Gly-72, Glu-89, Glu-93, and Glu-150. Positions 74–95 (FVDTRDISLEEGLKRELEEELG) match the Nudix box motif. Substrate contacts are provided by Asn-180 and Gln-184.

The protein belongs to the Nudix hydrolase family. NUDT16 subfamily. In terms of assembly, homodimer. Mg(2+) serves as cofactor. It depends on Mn(2+) as a cofactor. Requires Co(2+) as cofactor. As to expression, detected in ovary, and at very low levels in epithelial cells (at protein level).

It localises to the nucleus. Its subcellular location is the nucleolus. It is found in the nucleoplasm. The protein localises to the cytoplasm. It catalyses the reaction a 5'-end (N(7)-methyl 5'-triphosphoguanosine)-ribonucleoside in mRNA + H2O = N(7)-methyl-GDP + a 5'-end phospho-ribonucleoside in mRNA + 2 H(+). It carries out the reaction IDP + H2O = IMP + phosphate + H(+). The enzyme catalyses dIDP + H2O = dIMP + phosphate + H(+). The catalysed reaction is a 5'-end NAD(+)-phospho-ribonucleoside in mRNA + H2O = a 5'-end phospho-ribonucleoside in mRNA + NAD(+) + H(+). It catalyses the reaction a 5'-end FAD-phospho-ribonucleoside in mRNA + H2O = a 5'-end phospho-adenosine-phospho-ribonucleoside in mRNA + FMN + 2 H(+). It carries out the reaction a 5'-end CoA-ribonucleoside in mRNA + H2O = a 5'-end phospho-adenosine-phospho-ribonucleoside in mRNA + (R)-4'-phosphopantetheine + 2 H(+). Its function is as follows. RNA-binding and decapping enzyme that catalyzes the cleavage of the cap structure of snoRNAs and mRNAs in a metal-dependent manner. Part of the U8 snoRNP complex that is required for the accumulation of mature 5.8S and 28S rRNA. Has diphosphatase activity and removes m7G and/or m227G caps from U8 snoRNA and leaves a 5'monophosphate on the RNA. Also catalyzes the cleavage of the cap structure on mRNAs. Does not hydrolyze cap analog structures like 7-methylguanosine nucleoside triphosphate (m7GpppG). Also hydrolysis m7G- and m227G U3-capped RNAs but with less efficiencies. Has broad substrate specificity with manganese or cobalt as cofactor and can act on various RNA species. Binds to the U8 snoRNA; metal is not required for RNA-binding. May play a role in the regulation of snoRNAs and mRNAs degradation. Also acts as a phosphatase; hydrolyzes the non-canonical purine nucleotides inosine diphosphate (IDP) and deoxyinosine diphosphate (dITP) as well as guanosine diphosphate (GDP), deoxyguanosine diphosphate (dGDP), xanthine diphosphate (XDP), inosine triphosphate (ITP) and deoxyinosine triphosphate (ITP) to their respective monophosphate derivatives and does not distinguish between the deoxy- and ribose forms. The order of activity with different substrates is IDP &gt; dIDP &gt;&gt; GDP = dGDP &gt; XDP = ITP = dITP. Binds strongly to GTP, ITP and XTP. Participates in the hydrolysis of dIDP/IDP and probably excludes non-canonical purines from RNA and DNA precursor pools, thus preventing their incorporation into RNA and DNA and avoiding chromosomal lesions. Exhibits decapping activity towards NAD-capped RNAs and FAD-capped RNAs. Exhibits decapping activity towards dpCoA-capped RNAs in vitro. The sequence is that of U8 snoRNA-decapping enzyme (nudt16) from Xenopus laevis (African clawed frog).